Here is a 476-residue protein sequence, read N- to C-terminus: ATP synthase subunit beta (476 aa).

Position 157–164 (157–164 (GGAGVGKT)) interacts with ATP.

Belongs to the ATPase alpha/beta chains family. As to quaternary structure, F-type ATPases have 2 components, CF(1) - the catalytic core - and CF(0) - the membrane proton channel. CF(1) has five subunits: alpha(3), beta(3), gamma(1), delta(1), epsilon(1). CF(0) has three main subunits: a(1), b(2) and c(9-12). The alpha and beta chains form an alternating ring which encloses part of the gamma chain. CF(1) is attached to CF(0) by a central stalk formed by the gamma and epsilon chains, while a peripheral stalk is formed by the delta and b chains.

It localises to the cell membrane. It carries out the reaction ATP + H2O + 4 H(+)(in) = ADP + phosphate + 5 H(+)(out). In terms of biological role, produces ATP from ADP in the presence of a proton gradient across the membrane. The catalytic sites are hosted primarily by the beta subunits. The chain is ATP synthase subunit beta from Mycoplasma genitalium (strain ATCC 33530 / DSM 19775 / NCTC 10195 / G37) (Mycoplasmoides genitalium).